The primary structure comprises 136 residues: HetP-like commitment protein Alr2902 (136 aa).

A compositionally biased stretch (polar residues) spans 94-109 (KASTQDLNQSNNSDYL). The interval 94-120 (KASTQDLNQSNNSDYLTTPEPDKRGNI) is disordered.

The protein belongs to the HetP family. In terms of assembly, in bacterial two-hybrid assays interacts robustly with HetR and Alr3234 and weakly with itself, HetP and Asl1930.

In terms of biological role, delays heterocyst differentiation and commitment when nitrogen is limiting. Interplay between the 4 HetP paralogs controls the timing of commitment to heterocyst formation and its duration. Epistatic analysis show that the 3 paralogs act upstream of hetP to delay commitment (asl1930, alr3234) or inhibit development (alr2902). Asl1930 and Alr3234 must also attenuate the activity of Alr2902. When only this homolog is present no heterocysts are formed, showing it inhibits development. Ectopic expression partially complements a hetP deletion. This chain is HetP-like commitment protein Alr2902, found in Nostoc sp. (strain PCC 7120 / SAG 25.82 / UTEX 2576).